Here is a 353-residue protein sequence, read N- to C-terminus: Photosystem II protein D1 (353 aa).

N-acetylthreonine is present on T2. The residue at position 2 (T2) is a Phosphothreonine. A run of 3 helical transmembrane segments spans residues Y29 to S46, H118 to L133, and W142 to A156. H118 is a chlorophyll a binding site. Y126 contributes to the pheophytin a binding site. [CaMn4O5] cluster-binding residues include D170 and E189. The helical transmembrane segment at F197–L218 threads the bilayer. H198 contributes to the chlorophyll a binding site. Residues H215 and S264–F265 contribute to the a quinone site. Residue H215 coordinates Fe cation. H272 contributes to the Fe cation binding site. A helical transmembrane segment spans residues L274 to L288. Residues H332, E333, D342, and A344 each contribute to the [CaMn4O5] cluster site. The propeptide occupies A345–G353.

Belongs to the reaction center PufL/M/PsbA/D family. PSII is composed of 1 copy each of membrane proteins PsbA, PsbB, PsbC, PsbD, PsbE, PsbF, PsbH, PsbI, PsbJ, PsbK, PsbL, PsbM, PsbT, PsbX, PsbY, PsbZ, Psb30/Ycf12, at least 3 peripheral proteins of the oxygen-evolving complex and a large number of cofactors. It forms dimeric complexes. Requires The D1/D2 heterodimer binds P680, chlorophylls that are the primary electron donor of PSII, and subsequent electron acceptors. It shares a non-heme iron and each subunit binds pheophytin, quinone, additional chlorophylls, carotenoids and lipids. D1 provides most of the ligands for the Mn4-Ca-O5 cluster of the oxygen-evolving complex (OEC). There is also a Cl(-1) ion associated with D1 and D2, which is required for oxygen evolution. The PSII complex binds additional chlorophylls, carotenoids and specific lipids. as cofactor. Tyr-161 forms a radical intermediate that is referred to as redox-active TyrZ, YZ or Y-Z. In terms of processing, C-terminally processed by CTPA; processing is essential to allow assembly of the oxygen-evolving complex and thus photosynthetic growth.

It is found in the plastid. It localises to the chloroplast thylakoid membrane. It catalyses the reaction 2 a plastoquinone + 4 hnu + 2 H2O = 2 a plastoquinol + O2. Photosystem II (PSII) is a light-driven water:plastoquinone oxidoreductase that uses light energy to abstract electrons from H(2)O, generating O(2) and a proton gradient subsequently used for ATP formation. It consists of a core antenna complex that captures photons, and an electron transfer chain that converts photonic excitation into a charge separation. The D1/D2 (PsbA/PsbD) reaction center heterodimer binds P680, the primary electron donor of PSII as well as several subsequent electron acceptors. The polypeptide is Photosystem II protein D1 (Dioscorea elephantipes (Elephant's foot yam)).